We begin with the raw amino-acid sequence, 478 residues long: Lipoprotein lipase (478 aa).

A signal peptide spans 1–27 (MESKALLLVALSVWLQSLIVSREGLAT). The interval 35 to 56 (RDFTDIESKFALRTPEDTVEDT) is interaction with GPIHBP1. A disulfide bridge links cysteine 57 with cysteine 70. Asparagine 73 carries an N-linked (GlcNAc...) asparagine glycan. Residue tyrosine 124 is modified to 3'-nitrotyrosine. Serine 162 functions as the Nucleophile in the catalytic mechanism. Aspartate 186 serves as the catalytic Charge relay system. 3'-nitrotyrosine is present on tyrosine 194. Alanine 197, arginine 200, serine 202, and aspartate 205 together coordinate Ca(2+). Cysteines 246 and 269 form a disulfide. Positions 246 to 269 (CNIGEAIRVIAERGLGDVDQLVKC) are essential for determining substrate specificity. The Charge relay system role is filled by histidine 271. 2 cysteine pairs are disulfide-bonded: cysteine 294/cysteine 313 and cysteine 305/cysteine 308. The region spanning 344 to 467 (FHYQVKMRFS…KGKSSVVFVK (124 aa)) is the PLAT domain. Position 346 is a 3'-nitrotyrosine (tyrosine 346). N-linked (GlcNAc...) asparagine glycosylation occurs at asparagine 389. Residues 420 to 424 (WSNWW) are important for interaction with lipoprotein particles. Residues 433–437 (KIRVK) form an important for heparin binding region. The tract at residues 446–470 (IFCSREKKSHLQKGKSSVVFVKCHD) is interaction with GPIHBP1. A disulfide bridge connects residues cysteine 448 and cysteine 468.

This sequence belongs to the AB hydrolase superfamily. Lipase family. Homodimer. Interacts with GPIHBP1 with 1:1 stoichiometry. Interacts with APOC2; the interaction activates LPL activity in the presence of lipids. Interaction with heparan sulfate proteoglycans is required to protect LPL against loss of activity. Associates with lipoprotein particles in blood plasma. Interacts with LMF1 and SEL1L; interaction with SEL1L is required to prevent aggregation of newly synthesized LPL in the endoplasmic reticulum (ER), and for normal export of LPL from the ER to the extracellular space. Interacts with SORL1; SORL1 acts as a sorting receptor, promoting LPL localization to endosomes and later to lysosomes, leading to degradation of newly synthesized LPL. Post-translationally, tyrosine nitration after lipopolysaccharide (LPS) challenge down-regulates the lipase activity.

Its subcellular location is the cell membrane. It is found in the secreted. The protein resides in the extracellular space. The protein localises to the extracellular matrix. It catalyses the reaction a triacylglycerol + H2O = a diacylglycerol + a fatty acid + H(+). The enzyme catalyses a 1,2-diacyl-sn-glycero-3-phosphocholine + H2O = a 2-acyl-sn-glycero-3-phosphocholine + a fatty acid + H(+). It carries out the reaction 1,2,3-tri-(9Z-octadecenoyl)-glycerol + H2O = di-(9Z)-octadecenoylglycerol + (9Z)-octadecenoate + H(+). The catalysed reaction is 1,2-di-(9Z-octadecenoyl)-sn-glycero-3-phosphocholine + H2O = (9Z-octadecenoyl)-sn-glycero-3-phosphocholine + (9Z)-octadecenoate + H(+). It catalyses the reaction 1,2,3-tributanoylglycerol + H2O = dibutanoylglycerol + butanoate + H(+). The enzyme catalyses 1,2-dihexadecanoyl-sn-glycero-3-phosphocholine + H2O = hexadecanoyl-sn-glycero-3-phosphocholine + hexadecanoate + H(+). Its activity is regulated as follows. The apolipoprotein APOC2 acts as a coactivator of LPL activity. Ca(2+) binding promotes protein stability and formation of the active homodimer. Interaction with GPIHBP1 protects LPL against inactivation by ANGPTL4. Functionally, key enzyme in triglyceride metabolism. Catalyzes the hydrolysis of triglycerides from circulating chylomicrons and very low density lipoproteins (VLDL), and thereby plays an important role in lipid clearance from the blood stream, lipid utilization and storage. Although it has both phospholipase and triglyceride lipase activities it is primarily a triglyceride lipase with low but detectable phospholipase activity. Mediates margination of triglyceride-rich lipoprotein particles in capillaries. Recruited to its site of action on the luminal surface of vascular endothelium by binding to GPIHBP1 and cell surface heparan sulfate proteoglycans. This is Lipoprotein lipase (LPL) from Sus scrofa (Pig).